We begin with the raw amino-acid sequence, 2216 residues long: Protein Ycf2 (2216 aa).

1567–1574 (GSIGTGRS) contacts ATP.

This sequence belongs to the Ycf2 family.

Its subcellular location is the plastid stroma. Its function is as follows. Probable ATPase of unknown function. Its presence in a non-photosynthetic plant (Epifagus virginiana) and experiments in tobacco indicate that it has an essential function which is probably not related to photosynthesis. This is Protein Ycf2 from Epifagus virginiana (Beechdrops).